Consider the following 490-residue polypeptide: NAI2-like protein (490 aa).

The first 24 residues, 1–24, serve as a signal peptide directing secretion; sequence MGRKYVVLGLAVCLFLSSFNEVSC. 2 disordered regions span residues 43–83 and 155–206; these read EEGE…VDKF and AATN…FNKG. Residues 136 to 163 adopt a coiled-coil conformation; sequence IADERRQRLEDIERKLKAAAATNIVVED. Residues 171–183 are compositionally biased toward basic and acidic residues; sequence KVEETQEVVKFES. Residues 184–199 are compositionally biased toward low complexity; that stretch reads ESSSASSESRRQSSSS. Residues 433 to 465 adopt a coiled-coil conformation; it reads TFEKTVANLSRVIEEASQAYEEYHVVVRKWKEE.

This is NAI2-like protein from Arabidopsis thaliana (Mouse-ear cress).